We begin with the raw amino-acid sequence, 530 residues long: UDP-glucuronosyltransferase 1A7 (530 aa).

A signal peptide spans M1 to A25. N71, N292, and N344 each carry an N-linked (GlcNAc...) asparagine glycan. The helical transmembrane segment at V488–F504 threads the bilayer.

The protein belongs to the UDP-glycosyltransferase family. Homodimer. Homooligomer. Interacts with UGT1A1, UGT1A3, UGT1A4, UGT1A6, UGT1A8, UGT1A9 and UGT1A10 to form heterodimers. Isoform 1 interacts with isoform 2/i2 suggesting that oligomerization is involved in negative regulation of transferase activity by isoform 2. Isoform 1 also interacts with respective i2 isoforms of UGT1A1, UGT1A3, UGT1A4, UGT1A6, UGT1A8, UGT1A9 and UGT1A10. In terms of tissue distribution, liver and gastric tissue. Isoform 1 and isoform 2 are expressed in esophagus. Neither isoform is expressed in liver, kidney, colon and small intestine.

The protein resides in the endoplasmic reticulum membrane. The catalysed reaction is glucuronate acceptor + UDP-alpha-D-glucuronate = acceptor beta-D-glucuronoside + UDP + H(+). It carries out the reaction 17alpha-estradiol + UDP-alpha-D-glucuronate = 17alpha-estradiol 3-O-(beta-D-glucuronate) + UDP + H(+). It catalyses the reaction prunetin + UDP-alpha-D-glucuronate = prunetin-5-O-beta-D-glucuronide + UDP. The enzyme catalyses 5-epi-5-F2t-IsoP + UDP-alpha-D-glucuronate = 5-epi-5-F2t-IsoP-glucuronide + UDP + H(+). The catalysed reaction is (E)-ferulate + UDP-alpha-D-glucuronate = (E)-ferulic acid beta-D-glucuronate ester + UDP. It carries out the reaction candesartan + UDP-alpha-D-glucuronate = candesartan O-beta-D-glucuronoside + UDP. It catalyses the reaction SN-38 + UDP-alpha-D-glucuronate = SN-38 O-beta-D-glucuronide + UDP + H(+). The enzyme catalyses mycophenolate + UDP-alpha-D-glucuronate = mycophenolate 7-O-beta-D-glucuronide + UDP + H(+). In terms of biological role, UDP-glucuronosyltransferase (UGT) that catalyzes phase II biotransformation reactions in which lipophilic substrates are conjugated with glucuronic acid to increase the metabolite's water solubility, thereby facilitating excretion into either the urine or bile. Essential for the elimination and detoxification of drugs, xenobiotics and endogenous compounds. Catalyzes the glucuronidation of endogenous estrogen hormone epiestradiol. Involved in the glucuronidation of F2-isoprostane (5-epi-5-F2t-IsoP). Involved in the glucuronidation of the phytochemical ferulic acid at the carboxylic acid group. Also catalyzes the glucuronidation of the isoflavones genistein, daidzein, glycitein, formononetin, biochanin A and prunetin, which are phytoestrogens with anticancer and cardiovascular properties. Involved in the glucuronidation of the AGTR1 angiotensin receptor antagonist caderastan, a drug which can inhibit the effect of angiotensin II. Involved in the biotransformation of 7-ethyl-10-hydroxycamptothecin (SN-38), the pharmacologically active metabolite of the anticancer drug irinotecan. Also metabolizes mycophenolate, an immunosuppressive agent. Functionally, lacks UGT glucuronidation activity but acts as a negative regulator of isoform 1. This chain is UDP-glucuronosyltransferase 1A7, found in Homo sapiens (Human).